Here is a 338-residue protein sequence, read N- to C-terminus: Glyceraldehyde-3-phosphate dehydrogenase, cytosolic (338 aa).

Residues 14–15 (RI), D36, and R83 each bind NAD(+). D-glyceraldehyde 3-phosphate contacts are provided by residues 154-156 (SCT), T185, 214-215 (TG), and R237. Catalysis depends on C155, which acts as the Nucleophile. Position 319 (N319) interacts with NAD(+).

The protein belongs to the glyceraldehyde-3-phosphate dehydrogenase family. As to quaternary structure, homotetramer.

It localises to the cytoplasm. It catalyses the reaction D-glyceraldehyde 3-phosphate + phosphate + NAD(+) = (2R)-3-phospho-glyceroyl phosphate + NADH + H(+). The protein operates within carbohydrate degradation; glycolysis; pyruvate from D-glyceraldehyde 3-phosphate: step 1/5. Functionally, key enzyme in glycolysis that catalyzes the first step of the pathway by converting D-glyceraldehyde 3-phosphate (G3P) into 3-phospho-D-glyceroyl phosphate. Essential for the maintenance of cellular ATP levels and carbohydrate metabolism. The sequence is that of Glyceraldehyde-3-phosphate dehydrogenase, cytosolic (GAPC1) from Pisum sativum (Garden pea).